Here is a 257-residue protein sequence, read N- to C-terminus: Imidazole glycerol phosphate synthase subunit HisF (257 aa).

Residues Asp12 and Asp131 contribute to the active site.

Belongs to the HisA/HisF family. In terms of assembly, heterodimer of HisH and HisF.

It localises to the cytoplasm. It catalyses the reaction 5-[(5-phospho-1-deoxy-D-ribulos-1-ylimino)methylamino]-1-(5-phospho-beta-D-ribosyl)imidazole-4-carboxamide + L-glutamine = D-erythro-1-(imidazol-4-yl)glycerol 3-phosphate + 5-amino-1-(5-phospho-beta-D-ribosyl)imidazole-4-carboxamide + L-glutamate + H(+). The protein operates within amino-acid biosynthesis; L-histidine biosynthesis; L-histidine from 5-phospho-alpha-D-ribose 1-diphosphate: step 5/9. In terms of biological role, IGPS catalyzes the conversion of PRFAR and glutamine to IGP, AICAR and glutamate. The HisF subunit catalyzes the cyclization activity that produces IGP and AICAR from PRFAR using the ammonia provided by the HisH subunit. This chain is Imidazole glycerol phosphate synthase subunit HisF, found in Burkholderia lata (strain ATCC 17760 / DSM 23089 / LMG 22485 / NCIMB 9086 / R18194 / 383).